The primary structure comprises 266 residues: DNA damage-regulated autophagy modulator protein 2 (266 aa).

6 helical membrane passes run 8–28 (LSFLPSALVIWTAAAFIFSYI), 53–73 (KCLFGAMLNIAAVLCVATIYV), 92–112 (NKAGLVLGLLSCLGLSLVANF), 117–137 (FFAVHVCGAVLTFGMGSLYMF), 160–180 (LLLVIWCGVSAFSMLTCSSLL), and 207–227 (ITTAAEWSMSLSFFGFFLTYI).

It belongs to the DRAM/TMEM150 family.

It localises to the lysosome membrane. The protein resides in the photoreceptor inner segment. Its subcellular location is the apical cell membrane. In terms of biological role, plays a role in the initiation of autophagy. In the retina, might be involved in the process of photoreceptor cells renewal and recycling to preserve visual function. Induces apoptotic cell death when coexpressed with DRAM1. The sequence is that of DNA damage-regulated autophagy modulator protein 2 (DRAM2) from Bos taurus (Bovine).